The chain runs to 357 residues: Uroporphyrinogen decarboxylase (357 aa).

Substrate is bound by residues 27–31 (RQAGR), aspartate 77, tyrosine 154, threonine 209, and histidine 327.

It belongs to the uroporphyrinogen decarboxylase family. As to quaternary structure, homodimer.

The protein localises to the cytoplasm. It carries out the reaction uroporphyrinogen III + 4 H(+) = coproporphyrinogen III + 4 CO2. It participates in porphyrin-containing compound metabolism; protoporphyrin-IX biosynthesis; coproporphyrinogen-III from 5-aminolevulinate: step 4/4. Its function is as follows. Catalyzes the decarboxylation of four acetate groups of uroporphyrinogen-III to yield coproporphyrinogen-III. The polypeptide is Uroporphyrinogen decarboxylase (Proteus mirabilis (strain HI4320)).